The chain runs to 926 residues: Progesterone receptor (926 aa).

The disordered stretch occupies residues 1-48 (MTELQAKDPQVLHTSGASPSPPHIGSPLLARLDSGPFQGSQHSDVSSV). The tract at residues 1–165 (MTELQAKDPQ…PATKGLLSPL (165 aa)) is AF3; mediates transcriptional activation (in isoform B). Residues 1 to 559 (MTELQAKDPQ…YGFDSLPQKI (559 aa)) are modulating, Pro-Rich. A Glycyl lysine isopeptide (Lys-Gly) (interchain with G-Cter in SUMO) cross-link involves residue lysine 7. Serine 20 bears the Phosphoserine mark. The LXXL motif 1 signature appears at 56-60 (LDGLL). Residue serine 82 is modified to Phosphoserine. Positions 116–120 (LDSLL) match the LXXL motif 1 motif. Residues serine 131 and serine 163 each carry the phosphoserine modification. The interval 166–305 (MSRPEIKAGD…LATTVVDFIH (140 aa)) is mediates transcriptional transrepression (in isoform A). Residues 168–256 (RPEIKAGDSS…GTGSGGGVAA (89 aa)) form a disordered region. Positions 184 to 188 (KVLPK) match the Nuclear localization signal motif. Residues serine 191 and serine 214 each carry the phosphoserine modification. Serine 294 is subject to Phosphoserine; by MAPK1. The interval 327 to 364 (DSYDGGATAQGPFAPPRGSPSAPSPPVPCGDFPDCTYP) is disordered. Residues 339–354 (FAPPRGSPSAPSPPVP) show a composition bias toward pro residues. Serine 345 carries the phosphoserine; by MAPK modification. Lysine 388 is covalently cross-linked (Glycyl lysine isopeptide (Lys-Gly) (interchain with G-Cter in SUMO); alternate). Residue lysine 388 forms a Glycyl lysine isopeptide (Lys-Gly) (interchain with G-Cter in ubiquitin); alternate linkage. The interval 391-447 (EEGADAAVRSPRPYLSAGASSSTFPDFPLAPAPQRAPSSRPGEAAVAGGPSSAAVSP) is disordered. A Phosphoserine; by CDK2 modification is found at serine 400. Over residues 422–447 (APQRAPSSRPGEAAVAGGPSSAAVSP) the composition is skewed to low complexity. The segment at 453–539 (SALECILYKA…VYPPYLNYLR (87 aa)) is AF1; mediates transcriptional activation. Lysine 524 is covalently cross-linked (Glycyl lysine isopeptide (Lys-Gly) (interchain with G-Cter in SUMO)). The segment at residues 557–632 (QKICLICGDE…AGMVLGGRKF (76 aa)) is a DNA-binding region (nuclear receptor). 2 NR C4-type zinc fingers span residues 560–580 (CLIC…CGSC) and 596–615 (CAGR…CPAC). Serine 669 is subject to Phosphoserine. The region spanning 672–906 (QEIQLVPPLI…EFPEMMSEVI (235 aa)) is the NR LBD domain. Residues 673-926 (EIQLVPPLIN…MVKPLLFHKK (254 aa)) are AF2; mediates transcriptional activation. Arginine 759 contacts progesterone.

This sequence belongs to the nuclear hormone receptor family. NR3 subfamily. In terms of assembly, interacts with SMARD1 and UNC45A. Interacts with CUEDC2; the interaction promotes ubiquitination, decreases sumoylation, and represses transcriptional activity. Interacts with PIAS3; the interaction promotes sumoylation of PR in a hormone-dependent manner, inhibits DNA-binding, and alters nuclear export. Interacts with SP1; the interaction requires ligand-induced phosphorylation on Ser-294 by ERK1/2 MAPK. Interacts with PRMT2. Isoform A interacts with NCOR2. Isoform B (but not isoform A) interacts with NCOA2 and NCOA1. Isoform B (but not isoform A) interacts with KLF9. In terms of processing, phosphorylated on multiple serine sites. Several of these sites are hormone-dependent. Phosphorylation on Ser-294 is highly hormone-dependent and modulates ubiquitination and sumoylation on Lys-388. Phosphorylation on Ser-345 also requires induction by hormone. Basal phosphorylation on Ser-82, Ser-163, Ser-191 and Ser-400 is increased in response to progesterone and can be phosphorylated in vitro by the CDK2-A1 complex. Increased levels of phosphorylation on Ser-400 also in the presence of EGF, heregulin, IGF, PMA and FBS. Phosphorylation at this site by CDK2 is ligand-independent, and increases nuclear translocation and transcriptional activity. Phosphorylation at Ser-163 and Ser-294, but not at Ser-191, is impaired during the G(2)/M phase of the cell cycle. Phosphorylation on Ser-345 by ERK1/2 MAPK is required for interaction with SP1. Post-translationally, sumoylation is hormone-dependent and represses transcriptional activity. Sumoylation on all three sites is enhanced by PIAS3. Desumoylated by SENP1. Sumoylation on Lys-388, the main site of sumoylation, is repressed by ubiquitination on the same site, and modulated by phosphorylation at Ser-294. Ubiquitination is hormone-dependent and represses sumoylation on the same site. Promoted by MAPK-mediated phosphorylation on Ser-294. Ubiquitinated by UBR5, leading to its degradation: UBR5 specifically recognizes and binds ligand-bound PGR when it is not associated with coactivators (NCOAs). In presence of NCOAs, the UBR5-degron is not accessible, preventing its ubiquitination and degradation. In terms of processing, palmitoylated by ZDHHC7 and ZDHHC21. Palmitoylation is required for plasma membrane targeting and for rapid intracellular signaling via ERK and AKT kinases and cAMP generation. In terms of tissue distribution, expression of isoform A and isoform B in mammary epithelial cells is temporally and spatially separated during normal mammary gland development. Isoform A and isoform B are expressed in the pituitary. Isoform A and isoform B are differentially expressed in the ovary and oviduct, and the level of expression is dependent on both the cell type and estrous cycle stage.

The protein resides in the nucleus. It is found in the cytoplasm. Functionally, the steroid hormones and their receptors are involved in the regulation of eukaryotic gene expression and affect cellular proliferation and differentiation in target tissues. Depending on the isoform, progesterone receptor functions as a transcriptional activator or repressor. In terms of biological role, ligand-dependent transdominant repressor of steroid hormone receptor transcriptional activity including repression of its isoform B, MR and ER. Transrepressional activity may involve recruitment of corepressor NCOR2. Its function is as follows. Transcriptional activator of several progesteron-dependent promoters in a variety of cell types. Involved in activation of SRC-dependent MAPK signaling on hormone stimulation. The polypeptide is Progesterone receptor (Pgr) (Mus musculus (Mouse)).